The sequence spans 431 residues: Indole diterpene prenyltransferase nodD1 (431 aa).

85-86 (FI) is a binding site for L-tryptophan. Substrate-binding residues include R107, K194, R268, K270, Y272, and Y353.

The protein belongs to the tryptophan dimethylallyltransferase family.

It participates in secondary metabolite biosynthesis. Functionally, indole diterpene prenyltransferase; part of the gene cluster that mediates the biosynthesis of the indole diterpenes nodulisporic acids (NA). Nodulisporic acid A (NAA) and its chemically modified derivatives are of particular significance because of their highly potent insecticidal activity against blood-feeding arthropods and lack of observable adverse effects on mammals, in particular the tremogenicity associated with the paspaline-derived IDTs is not observed. The geranylgeranyl diphosphate (GGPP) synthase ggs1, localized outside of the cluster, is proposed to catalyze the first step in nodulisporic acid biosynthesis via conversion of farnesyl pyrophosphate and isopentyl pyrophosphate into geranylgeranyl pyrophosphate (GGPP). Condensation of indole-3-glycerol phosphate with GGPP by the prenyl transferase nodC then forms 3-geranylgeranylindole (3-GGI). Epoxidation by the FAD-dependent monooxygenase nodM leads to a single-epoxidized-GGI that is substrate of the terpene cyclase nodB for cyclization to yield emindole SB. The terminal methyl carbon, C28, of emindole SB is then oxidized by the cytochrome P450 monooxygenase nodW to produce nodulisporic acid F (NAF), the pentacyclic core of NAA. NAF is converted to nodulisporic acid E (NAE) via prenylation. This step is probably performed by one of the indole diterpene prenyltransferases nodD1 or nodD2. Several oxidation steps performed by the FAD-linked oxidoreductase nodO and one of the cytochrome P450 monooxygenase nodR, nodX or nodZ further convert NAE to nodulisporic acid D (NAD). NAD is substrate of cytochrome P450 monooxygenase nodJ to produce the precursor of nodulisporic acid C (NAC), converted to NAC by one of the indole diterpene prenyltransferases nodD1 or nodD2. The FAD-dependent monooxygenase nodY2 then oxidizes NAC to nodulisporic acid B (NAB). Finally NAB is converted to NAA by one of the cytochrome P450 monooxygenases nodR, nodX or nodZ. The polypeptide is Indole diterpene prenyltransferase nodD1 (Hypoxylon pulicicidum).